Here is a 152-residue protein sequence, read N- to C-terminus: SsrA-binding protein (152 aa).

Belongs to the SmpB family.

It is found in the cytoplasm. In terms of biological role, required for rescue of stalled ribosomes mediated by trans-translation. Binds to transfer-messenger RNA (tmRNA), required for stable association of tmRNA with ribosomes. tmRNA and SmpB together mimic tRNA shape, replacing the anticodon stem-loop with SmpB. tmRNA is encoded by the ssrA gene; the 2 termini fold to resemble tRNA(Ala) and it encodes a 'tag peptide', a short internal open reading frame. During trans-translation Ala-aminoacylated tmRNA acts like a tRNA, entering the A-site of stalled ribosomes, displacing the stalled mRNA. The ribosome then switches to translate the ORF on the tmRNA; the nascent peptide is terminated with the 'tag peptide' encoded by the tmRNA and targeted for degradation. The ribosome is freed to recommence translation, which seems to be the essential function of trans-translation. This chain is SsrA-binding protein, found in Helicobacter pylori (strain HPAG1).